The sequence spans 237 residues: Purine nucleoside phosphorylase DeoD-type (237 aa).

Residue His-4 participates in a purine D-ribonucleoside binding. Phosphate-binding positions include Gly-20, Arg-24, Arg-43, and 87 to 90; that span reads RVGT. Residues 179–181 and 203–204 contribute to the a purine D-ribonucleoside site; these read EME and SD. Asp-204 serves as the catalytic Proton donor.

This sequence belongs to the PNP/UDP phosphorylase family. In terms of assembly, homohexamer; trimer of homodimers.

The enzyme catalyses a purine D-ribonucleoside + phosphate = a purine nucleobase + alpha-D-ribose 1-phosphate. It catalyses the reaction a purine 2'-deoxy-D-ribonucleoside + phosphate = a purine nucleobase + 2-deoxy-alpha-D-ribose 1-phosphate. Its function is as follows. Catalyzes the reversible phosphorolytic breakdown of the N-glycosidic bond in the beta-(deoxy)ribonucleoside molecules, with the formation of the corresponding free purine bases and pentose-1-phosphate. The chain is Purine nucleoside phosphorylase DeoD-type from Streptococcus pyogenes serotype M12 (strain MGAS2096).